The primary structure comprises 454 residues: UDP-N-acetylmuramoylalanine--D-glutamate ligase (454 aa).

Residue 119 to 125 (GSNGKTT) participates in ATP binding.

The protein belongs to the MurCDEF family.

Its subcellular location is the cytoplasm. The catalysed reaction is UDP-N-acetyl-alpha-D-muramoyl-L-alanine + D-glutamate + ATP = UDP-N-acetyl-alpha-D-muramoyl-L-alanyl-D-glutamate + ADP + phosphate + H(+). It functions in the pathway cell wall biogenesis; peptidoglycan biosynthesis. Cell wall formation. Catalyzes the addition of glutamate to the nucleotide precursor UDP-N-acetylmuramoyl-L-alanine (UMA). In Latilactobacillus sakei subsp. sakei (strain 23K) (Lactobacillus sakei subsp. sakei), this protein is UDP-N-acetylmuramoylalanine--D-glutamate ligase.